The chain runs to 371 residues: Peptide chain release factor 2 (371 aa).

The residue at position 253 (Gln253) is an N5-methylglutamine.

The protein belongs to the prokaryotic/mitochondrial release factor family. Methylated by PrmC. Methylation increases the termination efficiency of RF2.

The protein localises to the cytoplasm. Peptide chain release factor 2 directs the termination of translation in response to the peptide chain termination codons UGA and UAA. This is Peptide chain release factor 2 from Mycobacterium sp. (strain KMS).